The primary structure comprises 416 residues: Gamma-glutamyl phosphate reductase (416 aa).

Belongs to the gamma-glutamyl phosphate reductase family.

Its subcellular location is the cytoplasm. It carries out the reaction L-glutamate 5-semialdehyde + phosphate + NADP(+) = L-glutamyl 5-phosphate + NADPH + H(+). Its pathway is amino-acid biosynthesis; L-proline biosynthesis; L-glutamate 5-semialdehyde from L-glutamate: step 2/2. Catalyzes the NADPH-dependent reduction of L-glutamate 5-phosphate into L-glutamate 5-semialdehyde and phosphate. The product spontaneously undergoes cyclization to form 1-pyrroline-5-carboxylate. The protein is Gamma-glutamyl phosphate reductase of Vibrio atlanticus (strain LGP32) (Vibrio splendidus (strain Mel32)).